Here is a 115-residue protein sequence, read N- to C-terminus: Large ribosomal subunit protein bL20c (115 aa).

Belongs to the bacterial ribosomal protein bL20 family.

It is found in the plastid. The protein localises to the chloroplast. Functionally, binds directly to 23S ribosomal RNA and is necessary for the in vitro assembly process of the 50S ribosomal subunit. It is not involved in the protein synthesizing functions of that subunit. In Cyanidium caldarium (Red alga), this protein is Large ribosomal subunit protein bL20c (rpl20).